We begin with the raw amino-acid sequence, 387 residues long: (S)-8-oxocitronellyl enol synthase (387 aa).

NADP(+) contacts are provided by residues 36-38, 64-65, 82-83, 106-107, and glutamine 140; these read TGI, RR, DI, and SW. Active-site residues include lysine 144 and tyrosine 177. Substrate-binding residues include lysine 144 and tyrosine 177. Residues tyrosine 177 and 211 to 213 contribute to the NADP(+) site; that span reads SMM.

The protein belongs to the short-chain dehydrogenases/reductases (SDR) family. Highly divergent. Expressed in leaves.

It catalyses the reaction (S)-8-oxocitronellyl enol + NADP(+) = (6E)-8-oxogeranial + NADPH + H(+). The catalysed reaction is (S)-8-oxocitronellyl enol + NAD(+) = (6E)-8-oxogeranial + NADH + H(+). The enzyme catalyses (R)-8-oxocitronellyl enol + NADP(+) = (6E)-8-oxogeranial + NADPH + H(+). Functionally, iridoid synthase that catalyzes the first step in generation of the iridoid ring scaffold using the linear monoterpene (6E)-8-oxogeranial as substrate. Reduces 8-oxogeranial, generating an unstable product that is subsequently cyclized into several possible products, either non-enzymically or by dedicated cyclases. Iridoids comprise a large family of distinctive bicyclic monoterpenes that possess a wide range of pharmacological activities, including anticancer, anti-inflammatory, antifungal and antibacterial activities. The protein is (S)-8-oxocitronellyl enol synthase of Antirrhinum majus (Garden snapdragon).